Reading from the N-terminus, the 714-residue chain is MIKKYEYDLCGKKIEVTIGKVAEQANGACLIQSGETVLLVTAVGSKEPREGVDFFPLTCDFEEKLYSVGKIPGGFIKREGRPSEKATLTARLIDRPLRPLFPEGYHNDVQVIATALSVDQDNTPDILAMIGSSIALSISDIPFLGPTGSVAVGMIDGEFIINPTKEQREKSDLELTVAGTKDAIMMVEAGCNNITEQQVLKAILRAHEEIKKICEFIESIQKECGKPKQEFIQPEKNIELDEEVKSFCIEDLKKITVNEDKLDREDHINTLKRSVVDYFVEKYDESIASKVSTIYDDLEKSEVRRLILEDYIRPDNRKLDQIREITCDVDILPRPHGSGLFKRGQTQVLSVTTLGTPSDAQVLDGLIEQEDKRYMHQYNFPPYSVGDARPLRSPGRREIGHGALAERALLPVIPSEEEFPYTIRVVSEVLSSNGSSSQASVCGSTLSLLDAGVPIKEPVAGIAMGLIKEDDNVVILSDIQGLEDHLGDMDFKVAGTKDGITALQMDIKITGISEEILTEALERARVGRLHILSLMNECISEPNKEISKYAPRIMVINIAPEKVREVIGPGGKVINKIIDETGVKIDTEDDGKITVAGENTESAQRAIDMIKEIVREPEIGEKYLGRVTKIMNFGAFVEILPGKEGLLHISNIAHERTNKVEDVLKENDEIMVKLMDIDDQGKMTLSRKALLPKPERKEKKNFDKKSEDQNSEDK.

Positions 484 and 490 each coordinate Mg(2+). Residues 551 to 610 form the KH domain; it reads PRIMVINIAPEKVREVIGPGGKVINKIIDETGVKIDTEDDGKITVAGENTESAQRAIDMI. Positions 620-688 constitute an S1 motif domain; the sequence is GEKYLGRVTK…DQGKMTLSRK (69 aa). The tract at residues 685 to 714 is disordered; that stretch reads LSRKALLPKPERKEKKNFDKKSEDQNSEDK. A compositionally biased stretch (basic and acidic residues) spans 693–714; it reads KPERKEKKNFDKKSEDQNSEDK.

Belongs to the polyribonucleotide nucleotidyltransferase family. The cofactor is Mg(2+).

The protein resides in the cytoplasm. The enzyme catalyses RNA(n+1) + phosphate = RNA(n) + a ribonucleoside 5'-diphosphate. Its function is as follows. Involved in mRNA degradation. Catalyzes the phosphorolysis of single-stranded polyribonucleotides processively in the 3'- to 5'-direction. The sequence is that of Polyribonucleotide nucleotidyltransferase from Finegoldia magna (strain ATCC 29328 / DSM 20472 / WAL 2508) (Peptostreptococcus magnus).